The sequence spans 162 residues: Protein LTO1 (162 aa).

Residues Gly-17 to Gly-53 form a deca-GX3 motif; required for interaction with YAE1 and the CIA complex region.

Belongs to the LTO1 family. Forms a complex with YAE1; the complex bridges the interaction between the CIA complex and RLI1. Associates with the CIA complex (via its C-terminal tryptophan).

Its subcellular location is the nucleus. In terms of biological role, essential for life in oxygen, but nonessential under anaerobic conditions. Required for biogenesis of the large ribosomal subunit and initiation of translation in oxygen. The complex LTO1:YAE1 functions as a target specific adapter that recruits apo-RLI1 to the cytosolic iron-sulfur protein assembly (CIA) complex machinery. The protein is Protein LTO1 of Saccharomyces cerevisiae (strain ATCC 204508 / S288c) (Baker's yeast).